We begin with the raw amino-acid sequence, 590 residues long: Aspartate--tRNA(Asp/Asn) ligase (590 aa).

L-aspartate is bound at residue glutamate 173. Residues 197 to 200 form an aspartate region; the sequence is QIFK. Arginine 219 serves as a coordination point for L-aspartate. ATP contacts are provided by residues 219-221 and glutamine 228; that span reads RDE. Residue histidine 450 participates in L-aspartate binding. Glutamate 484 is an ATP binding site. Arginine 491 lines the L-aspartate pocket. 536–539 contributes to the ATP binding site; sequence GLDR.

This sequence belongs to the class-II aminoacyl-tRNA synthetase family. Type 1 subfamily. In terms of assembly, homodimer.

It is found in the cytoplasm. The catalysed reaction is tRNA(Asx) + L-aspartate + ATP = L-aspartyl-tRNA(Asx) + AMP + diphosphate. Aspartyl-tRNA synthetase with relaxed tRNA specificity since it is able to aspartylate not only its cognate tRNA(Asp) but also tRNA(Asn). Reaction proceeds in two steps: L-aspartate is first activated by ATP to form Asp-AMP and then transferred to the acceptor end of tRNA(Asp/Asn). The sequence is that of Aspartate--tRNA(Asp/Asn) ligase from Coxiella burnetii (strain RSA 493 / Nine Mile phase I).